A 1616-amino-acid chain; its full sequence is MAYTQTATSSALLETVRGNNTLVNDLAKRRLYDTAVDEFNARDRRPKVNFSKVVSEEQTLIATKAYPEFQITFYNTQNAVHSLAGGLRSLELEYLMMQIPYGSLTYDIGGNFASHLFKGRAYVHCCMPNLDVRDIMRHEGQKDSIELYLSRLERGNKHVPNFQKEAFERYAEMPNEVVCHDTFQTCRHSQECYTGRVYAIALHSIYDIPADEFGAALLRKNVHVCYAAFHFSENLLLEDSHVNLDEINACFQRDGDRLTFSFASESTLNHSHSYSNILKYVCKTYFPASNREVYMKEFLVTRVNTWFCKFSRIDTFLFYKGVAHKGVDSEQFYKAMEDAWHYKKTLAMCNSERILLEDSSSVNYWFPKMRDMVIVPLFDISLETSKRTRKEVLVSKDFVYTVLNHIRTYQAKALTYSNVLSFVESIRSRVIINGVTARSEWDVDKSLLQSLSMTFFLHTKLAVLKDDLLISKFALGPKTVSQHVWDEISLAFGNAFPSIKERLINRKLIKITENALEIRVPDLYVTFHDRLVSEYKMSVDMPVLDIRKKMEETEEMYNALSELSVLKNSDKFDVDVFSQMCQSLEVDPMTAAKVIVAVMSNESGLTLTFEQPTEANVALALQDSEKASDGALVVTSRDVEEPSIRGSMARGELQLAGLSGDVPESSYTRSEEIESLEQFHMATASSLIHKQMCSIVYTGPLKVQQMKNFIDSLVASLSAAVSNLVKILKDTAAIDLETRQKFGVLDVASKRWLVKPSAKNHAWGVVETHARKYHVALLEHDEFGIITCDNWRRVAVSSESVVYSDMAKLRTLRRLLKDGEPHVSSAKVVLVDGVPGCGKTKEILSRVNFEEDLILVPGRQAAEMIRRRANASGIIVATKDNVRTVDSFLMNYGKGARCQFKRLFIDEGLMLHTGCVNFLVEMSLCDIAYVYGDTQQIPYINRVTGFPYPAHFAKLEVDEVETRRTTLRCPADVTHFLNQRYEGHVMCTSSEKKSVSQEMVSGAASINPVSKPLKGKILTFTQSDKEALLSRGYADVHTVHEVQGETYADVSLVRLTPTPVSIIARDSPHVLVSLSRHTKSLKYYTVVMDPLVSIIRDLERVSSYLLDMYKVDAGTQXQLQVDSVFKNFNLFVAAPKTGDISDMQFYYDKCLPGNSTLLNNYDAVTMKLTDISLNVKDCILDMSKSVAAPKDVKPTLIPMVRTAAEMPRQTGLLENLVAMIKRNFNSPELSGVVDIENTASLVVDKFFDSYLLKEKRKPNKNFSLFSRESLNRWIAKQEQVTIGQLADFDFVDLPAVDQYRHMIKAQPKQKLDLSIQTEYPALQTIVYHSKKINAIFGPLFSELTRQLLDSIDSSRFLFFTRKTPAQIEDFFGDLDSHVPMDVLELDVSKYDKSQNEFHCAVEYEIWRRLGLEDFLAEVWKQGHRKTTLKDYTAGIKTCLWYQRKSGDVTTFIGNTVIIASCLASMLPMEKLIKGAFCGDDSLLYFPKGCEYPDIQQAANLMWNFEAKLFKKQYGYFCGRYVIHHDRGCIVYYDPLKLISKLGAKHIKDWDHLEEFRRSLCDVAESLNNCAYYTQLDDAVGEVHKTAPPGSFVYKSLVKYLSDKVLFRSLFLDGSSC.

A methyltransferase region spans residues 50-458 (FSKVVSEEQT…QSLSMTFFLH (409 aa)). An Alphavirus-like MT domain is found at 72 to 281 (TFYNTQNAVH…HSYSNILKYV (210 aa)). Positions 801 to 963 (VVYSDMAKLR…KLEVDEVETR (163 aa)) constitute a (+)RNA virus helicase ATP-binding domain. Residues 830–1085 (LVDGVPGCGK…RHTKSLKYYT (256 aa)) are helicase. 833–840 (GVPGCGKT) serves as a coordination point for ATP. The region spanning 964 to 1116 (RTTLRCPADV…DMYKVDAGTQ (153 aa)) is the (+)RNA virus helicase C-terminal domain. The RdRp catalytic domain maps to 1380-1493 (MDVLELDVSK…YFPKGCEYPD (114 aa)).

This sequence belongs to the ssRNA positive-strand viruses RNA-directed RNA polymerase family. Heterodimer of a large and a small subunit.

It catalyses the reaction RNA(n) + a ribonucleoside 5'-triphosphate = RNA(n+1) + diphosphate. The catalysed reaction is ATP + H2O = ADP + phosphate + H(+). Functionally, is an RNA-dependent RNA polymerase active in viral RNA replication. In terms of biological role, is a methyltransferase active in RNA capping and an RNA helicase. Methyltransferase displays a cytoplasmic capping enzyme activity. This function is necessary since all viral RNAs are synthesized in the cytoplasm, and host capping enzymes are restricted to the nucleus. Helicase region probably exhibits NTPase and RNA unwinding activities (Potential). It also acts as a suppressor of RNA-mediated gene silencing, also known as post-transcriptional gene silencing (PTGS), a mechanism of plant viral defense that limits the accumulation of viral RNAs. May mediate silencing suppression through either inhibition of HEN1-mediated siRNA or siRNA demethylation. In Antirrhinum majus (Garden snapdragon), this protein is Replicase large subunit.